Reading from the N-terminus, the 497-residue chain is Ammonium transporter 1 (497 aa).

At M1–D32 the chain is on the extracellular side. Residues V33–F53 form a helical membrane-spanning segment. Topologically, residues Y54–A63 are cytoplasmic. The helical transmembrane segment at I64–W84 threads the bilayer. The Extracellular portion of the chain corresponds to G85–D122. The chain crosses the membrane as a helical span at residues I123–A143. The Cytoplasmic portion of the chain corresponds to A144–M150. Residues F151–W171 traverse the membrane as a helical segment. Residues T172 to F187 lie on the Extracellular side of the membrane. Residues A188–I208 traverse the membrane as a helical segment. The Cytoplasmic portion of the chain corresponds to G209–N223. A helical membrane pass occupies residues V224–G244. The Extracellular segment spans residues S245–G253. A helical membrane pass occupies residues V254 to I274. Residues D275–H281 lie on the Cytoplasmic side of the membrane. The chain crosses the membrane as a helical span at residues W282–S302. Residue G303 is a topological domain, extracellular. Residues F304–A324 traverse the membrane as a helical segment. Residues T325 to D338 are Cytoplasmic-facing. The chain crosses the membrane as a helical span at residues I339 to A359. Residues D360 to C394 lie on the Extracellular side of the membrane. A helical membrane pass occupies residues A395–L415. The Cytoplasmic segment spans residues S416–I497. The disordered stretch occupies residues Y440–I497. The segment covering T451–A466 has biased composition (polar residues). Positions S467–S490 are enriched in basic and acidic residues.

This sequence belongs to the ammonia transporter channel (TC 1.A.11.2) family.

The protein resides in the membrane. In terms of biological role, transporter for ammonium to use as a nitrogen source. Under ammonium limitation acts as an ammonium sensor, generating a signal that leads to pseudohyphal growth. The protein is Ammonium transporter 1 (amt1) of Schizosaccharomyces pombe (strain 972 / ATCC 24843) (Fission yeast).